We begin with the raw amino-acid sequence, 157 residues long: Crossover junction endodeoxyribonuclease RuvC (157 aa).

Active-site residues include aspartate 7, glutamate 67, and aspartate 140. The Mg(2+) site is built by aspartate 7, glutamate 67, and aspartate 140.

Belongs to the RuvC family. Homodimer which binds Holliday junction (HJ) DNA. The HJ becomes 2-fold symmetrical on binding to RuvC with unstacked arms; it has a different conformation from HJ DNA in complex with RuvA. In the full resolvosome a probable DNA-RuvA(4)-RuvB(12)-RuvC(2) complex forms which resolves the HJ. Mg(2+) serves as cofactor.

The protein localises to the cytoplasm. It carries out the reaction Endonucleolytic cleavage at a junction such as a reciprocal single-stranded crossover between two homologous DNA duplexes (Holliday junction).. Its function is as follows. The RuvA-RuvB-RuvC complex processes Holliday junction (HJ) DNA during genetic recombination and DNA repair. Endonuclease that resolves HJ intermediates. Cleaves cruciform DNA by making single-stranded nicks across the HJ at symmetrical positions within the homologous arms, yielding a 5'-phosphate and a 3'-hydroxyl group; requires a central core of homology in the junction. The consensus cleavage sequence is 5'-(A/T)TT(C/G)-3'. Cleavage occurs on the 3'-side of the TT dinucleotide at the point of strand exchange. HJ branch migration catalyzed by RuvA-RuvB allows RuvC to scan DNA until it finds its consensus sequence, where it cleaves and resolves the cruciform DNA. The sequence is that of Crossover junction endodeoxyribonuclease RuvC from Rickettsia typhi (strain ATCC VR-144 / Wilmington).